The following is a 199-amino-acid chain: dITP/XTP pyrophosphatase (199 aa).

7–12 (SNNRGK) lines the substrate pocket. Asp68 acts as the Proton acceptor in catalysis. Asp68 is a binding site for Mg(2+). Substrate is bound by residues Ala69, 154 to 157 (FGFD), Lys177, and 182 to 183 (HR).

It belongs to the HAM1 NTPase family. As to quaternary structure, homodimer. Requires Mg(2+) as cofactor.

The enzyme catalyses XTP + H2O = XMP + diphosphate + H(+). It carries out the reaction dITP + H2O = dIMP + diphosphate + H(+). The catalysed reaction is ITP + H2O = IMP + diphosphate + H(+). Its function is as follows. Pyrophosphatase that catalyzes the hydrolysis of nucleoside triphosphates to their monophosphate derivatives, with a high preference for the non-canonical purine nucleotides XTP (xanthosine triphosphate), dITP (deoxyinosine triphosphate) and ITP. Seems to function as a house-cleaning enzyme that removes non-canonical purine nucleotides from the nucleotide pool, thus preventing their incorporation into DNA/RNA and avoiding chromosomal lesions. This Albidiferax ferrireducens (strain ATCC BAA-621 / DSM 15236 / T118) (Rhodoferax ferrireducens) protein is dITP/XTP pyrophosphatase.